The primary structure comprises 132 residues: Agouti-signaling protein (132 aa).

Positions 1–22 (MDVTRLLLATLLVFLCFFTANS) are cleaved as a signal peptide. An N-linked (GlcNAc...) asparagine glycan is attached at N39. A disordered region spans residues 61–87 (QIGRKEAEKKRSSKKEASMKKVARPRT). Residues 63 to 79 (GRKEAEKKRSSKKEASM) are compositionally biased toward basic and acidic residues. Disulfide bonds link C93–C108, C100–C114, C107–C125, C111–C132, and C116–C123. Positions 93 to 132 (CVATRNSCKPPAPACCDPCASCQCRFFRSACSCRVLSLNC) constitute an Agouti domain.

The protein resides in the secreted. Its function is as follows. Involved in the regulation of melanogenesis. The binding of ASP to MC1R precludes alpha-MSH initiated signaling and thus blocks production of cAMP, leading to a down-regulation of eumelanogenesis (brown/black pigment) and thus increasing synthesis of pheomelanin (yellow/red pigment). The chain is Agouti-signaling protein (ASIP) from Gorilla gorilla gorilla (Western lowland gorilla).